A 713-amino-acid polypeptide reads, in one-letter code: P-loop NTPase domain-containing protein LPA1 homolog (713 aa).

Disordered regions lie at residues 218–249 (AKKR…PIGK), 504–575 (TSQA…EDLS), and 650–713 (LDSP…APDK). Over residues 231–246 (DFDKTRPLNDKPDGKP) the composition is skewed to basic and acidic residues. Polar residues predominate over residues 504-531 (TSQAGSVNESWDNANEGTGSHVPSSSGS). Basic and acidic residues predominate over residues 533-544 (KKLDGHCKEIKE). A compositionally biased stretch (acidic residues) spans 551-562 (SDDDEEEEEEAA). Low complexity predominate over residues 656–668 (ARSSSALPISASS).

In terms of biological role, required for the accumulation of phytic acid in seeds. Phytic acid is the primary storage form of phosphorus in cereal grains and other plant seeds. The sequence is that of P-loop NTPase domain-containing protein LPA1 homolog from Oryza sativa subsp. japonica (Rice).